Here is a 490-residue protein sequence, read N- to C-terminus: ATP synthase subunit beta (490 aa).

173 to 180 (GGAGVGKT) is an ATP binding site.

It belongs to the ATPase alpha/beta chains family. As to quaternary structure, F-type ATPases have 2 components, CF(1) - the catalytic core - and CF(0) - the membrane proton channel. CF(1) has five subunits: alpha(3), beta(3), gamma(1), delta(1), epsilon(1). CF(0) has three main subunits: a(1), b(2) and c(9-12). The alpha and beta chains form an alternating ring which encloses part of the gamma chain. CF(1) is attached to CF(0) by a central stalk formed by the gamma and epsilon chains, while a peripheral stalk is formed by the delta and b chains.

Its subcellular location is the cell membrane. It catalyses the reaction ATP + H2O + 4 H(+)(in) = ADP + phosphate + 5 H(+)(out). Produces ATP from ADP in the presence of a proton gradient across the membrane. The catalytic sites are hosted primarily by the beta subunits. This is ATP synthase subunit beta from Bifidobacterium longum (strain DJO10A).